Reading from the N-terminus, the 348-residue chain is Chitinase (348 aa).

Positions 1-29 (MKLKKIIPAFPLLSTVAVGLWLTPTQASA) are cleaved as a signal peptide. One can recognise a GH18 domain in the interval 42–348 (KVLVGYWHNW…FATRYSNLVK (307 aa)). Residue Glu-161 is the Proton donor of the active site.

The protein belongs to the glycosyl hydrolase 18 family.

Its subcellular location is the secreted. The catalysed reaction is Random endo-hydrolysis of N-acetyl-beta-D-glucosaminide (1-&gt;4)-beta-linkages in chitin and chitodextrins.. Its pathway is glycan degradation; chitin degradation. In terms of biological role, involved in chitin degradation. Catalyzes the cleavage of glycosidic linkages in chitooligosaccharides and in alpha- and beta-chitin. Its activity on chitooligosaccharides increases considerably with degrees of polymerization (the initial rate of hydrolysis for GlcNAc5 is about 130-fold higher than that for GlcNAc3). Its activity is greatly stimulated in the presence of the lytic chitin monooxygenase EfCBM33A, which attacks the crystalline structure of chitin and makes the polymer more accessible to the chitinase; combining the two enzymes leads to rapid and complete depolymerization of crystalline chitin, especially with beta-chitin as a substrate. Is likely involved in a chitin degradation pathway that allows E.faecalis V583 to grow on chitin as a carbon source. This chain is Chitinase, found in Enterococcus faecalis (strain ATCC 700802 / V583).